The following is a 288-amino-acid chain: Eukaryotic translation initiation factor 3 subunit F-2 (288 aa).

The MPN domain maps to 12 to 149 (VLLHPLVLFQ…TRIFCAVATG (138 aa)).

This sequence belongs to the eIF-3 subunit F family. Component of the eukaryotic translation initiation factor 3 (eIF-3) complex. The eIF-3 complex interacts with pix.

It localises to the cytoplasm. In terms of biological role, component of the eukaryotic translation initiation factor 3 (eIF-3) complex, which is involved in protein synthesis of a specialized repertoire of mRNAs and, together with other initiation factors, stimulates binding of mRNA and methionyl-tRNAi to the 40S ribosome. The eIF-3 complex specifically targets and initiates translation of a subset of mRNAs involved in cell proliferation. The protein is Eukaryotic translation initiation factor 3 subunit F-2 of Drosophila persimilis (Fruit fly).